We begin with the raw amino-acid sequence, 333 residues long: MFFMNFKYHWFIYFLITIFVLMMNSNNIFIQWMLMEFGTIISISLINIKSTNKTPSLIYYSVSVISSIFLFFMIIVYLSSISFTKTDTFNFMVQMMFFLKIGTFPFHFWMIYSYEMMNWKQIFLMSTLIKFIPIYMMVSMTKINSWTLYFLITNSLYISFYANKFYTLKKLLACSTIFNSFYFIFILELNKNMFIAMIILYSFNYFLLISFLNKFNIQNFNFMFYNKYQMYTFLTLMFNYSMYPIFLSFVIKWNLIFMMVSVKAYNWILFLLMISSMLMIWNYIIILKRVFLKMNFYKNNFIDDKDNKYMYHSYFALTLLSFNISFFITLNFL.

10 helical membrane-spanning segments follow: residues 10–30 (WFIYFLITIFVLMMNSNNIFI), 57–77 (LIYYSVSVISSIFLFFMIIVY), 91–111 (FMVQMMFFLKIGTFPFHFWMI), 121–141 (QIFLMSTLIKFIPIYMMVSMT), 143–163 (INSWTLYFLITNSLYISFYAN), 170–190 (KLLACSTIFNSFYFIFILELN), 192–212 (NMFIAMIILYSFNYFLLISFL), 242–262 (MYPIFLSFVIKWNLIFMMVSV), 267–287 (WILFLLMISSMLMIWNYIIIL), and 313–333 (SYFALTLLSFNISFFITLNFL).

This sequence belongs to the complex I subunit 2 family.

The protein localises to the mitochondrion inner membrane. The enzyme catalyses a ubiquinone + NADH + 5 H(+)(in) = a ubiquinol + NAD(+) + 4 H(+)(out). Its function is as follows. Core subunit of the mitochondrial membrane respiratory chain NADH dehydrogenase (Complex I) that is believed to belong to the minimal assembly required for catalysis. Complex I functions in the transfer of electrons from NADH to the respiratory chain. The immediate electron acceptor for the enzyme is believed to be ubiquinone. This chain is NADH-ubiquinone oxidoreductase chain 2 (ND2), found in Apis mellifera ligustica (Common honeybee).